The primary structure comprises 309 residues: Thiamine-monophosphate kinase (309 aa).

Mg(2+)-binding residues include D25, T39, S40, and D41. Residue D48 participates in substrate binding. The Mg(2+) site is built by D69 and D117. ATP is bound by residues 116–117 and R140; that span reads GD. A Mg(2+)-binding site is contributed by D201. Residue S203 participates in ATP binding. D204 contributes to the Mg(2+) binding site. Positions 250 and 298 each coordinate substrate.

This sequence belongs to the thiamine-monophosphate kinase family.

It catalyses the reaction thiamine phosphate + ATP = thiamine diphosphate + ADP. Its pathway is cofactor biosynthesis; thiamine diphosphate biosynthesis; thiamine diphosphate from thiamine phosphate: step 1/1. Catalyzes the ATP-dependent phosphorylation of thiamine-monophosphate (TMP) to form thiamine-pyrophosphate (TPP), the active form of vitamin B1. The sequence is that of Thiamine-monophosphate kinase from Pyrococcus horikoshii (strain ATCC 700860 / DSM 12428 / JCM 9974 / NBRC 100139 / OT-3).